Consider the following 262-residue polypeptide: uncharacterized protein (262 aa).

Residues H7, H9, E98, H138, H162, and D212 each contribute to the a divalent metal cation site.

This sequence belongs to the metallo-dependent hydrolases superfamily. TatD-type hydrolase family. Requires a divalent metal cation as cofactor.

This is an uncharacterized protein from Haemophilus influenzae (strain ATCC 51907 / DSM 11121 / KW20 / Rd).